A 573-amino-acid chain; its full sequence is Potassium-transporting ATPase potassium-binding subunit (573 aa).

The next 10 membrane-spanning stretches (helical) occupy residues isoleucine 6–isoleucine 26, phenylalanine 66–leucine 86, alanine 135–isoleucine 155, isoleucine 177–valine 197, isoleucine 257–valine 277, glycine 283–isoleucine 303, isoleucine 382–phenylalanine 402, methionine 428–isoleucine 448, isoleucine 493–leucine 513, and phenylalanine 537–proline 557.

The protein belongs to the KdpA family. As to quaternary structure, the system is composed of three essential subunits: KdpA, KdpB and KdpC.

The protein localises to the cell inner membrane. Part of the high-affinity ATP-driven potassium transport (or Kdp) system, which catalyzes the hydrolysis of ATP coupled with the electrogenic transport of potassium into the cytoplasm. This subunit binds the periplasmic potassium ions and delivers the ions to the membrane domain of KdpB through an intramembrane tunnel. This Francisella tularensis subsp. novicida (strain U112) protein is Potassium-transporting ATPase potassium-binding subunit.